A 371-amino-acid chain; its full sequence is uncharacterized protein (371 aa).

33 to 40 (GPLNSGKT) serves as a coordination point for ATP.

Belongs to the archaeal ATPase family.

This is an uncharacterized protein from Methanocaldococcus jannaschii (strain ATCC 43067 / DSM 2661 / JAL-1 / JCM 10045 / NBRC 100440) (Methanococcus jannaschii).